We begin with the raw amino-acid sequence, 425 residues long: RNA-binding protein L (425 aa).

The span at 1–20 (MQQPPSQPQPGMGGPPPPPQ) shows a compositional bias: pro residues. The interval 1-82 (MQQPPSQPQP…AAPPPQAMPA (82 aa)) is disordered. A compositionally biased stretch (low complexity) spans 21-31 (GAAGQPPQWGA). Over residues 32 to 80 (IPPPMPPHQYGAPPPQQPPAMWGQPPPQAHYGQVPPPQPYYAAPPPQAM) the composition is skewed to pro residues. RRM domains lie at 90–170 (KTLW…WASA), 180–259 (YTIF…PAAN), and 284–356 (TTIF…WGRS).

It belongs to the polyadenylate-binding RBP45 family. In terms of assembly, interacts with RBP-P. Interacts with RAB5A.

The protein localises to the nucleus. The protein resides in the cytoplasm. In terms of biological role, RNA-binding protein that binds to a cis-localization element or zipcode, within the 5'-CDS of prolamine RNA. Binds strongly to glutelin and prolamin mRNAs, particularly to 3'-UTR and zipcode RNA. Recognizes and binds to glutelin zipcode RNA, which is required for proper mRNA localization to cisternal endoplasmic reticulum. Recognizes and binds to prolamin zipcode RNA, which is required for proper mRNA localization to the protein body endoplasmic reticulum that delimits the prolamine intracisternal inclusion granules. Required for the correct localization of glutelin and prolamine mRNA in endosperm cells during grain development. RBP-L and RBP-P form a quaternary complex with the membrane trafficking factors NSF and RAB5A. This quaternay complex carries glutelin mRNAs for active transport on endosomes to the cortical endoplasmic reticulum membrane, and enables endosome-mediated glutelin mRNA transport in endosperm cells. The protein is RNA-binding protein L of Oryza sativa subsp. japonica (Rice).